Consider the following 82-residue polypeptide: Cysteine proteinase inhibitor A (82 aa).

The protein belongs to the cystatin family.

Its function is as follows. Strong inhibitor of papain and ficin but poor inhibitor of cathepsin H, B and L. This is Cysteine proteinase inhibitor A from Helianthus annuus (Common sunflower).